Reading from the N-terminus, the 424-residue chain is Serine--tRNA ligase (424 aa).

232 to 234 is an L-serine binding site; that stretch reads TAE. 263–265 is a binding site for ATP; that stretch reads RSE. Glu-286 is an L-serine binding site. 350–353 lines the ATP pocket; sequence EISS. Ser-385 is a binding site for L-serine.

It belongs to the class-II aminoacyl-tRNA synthetase family. Type-1 seryl-tRNA synthetase subfamily. Homodimer. The tRNA molecule binds across the dimer.

It localises to the cytoplasm. It catalyses the reaction tRNA(Ser) + L-serine + ATP = L-seryl-tRNA(Ser) + AMP + diphosphate + H(+). The enzyme catalyses tRNA(Sec) + L-serine + ATP = L-seryl-tRNA(Sec) + AMP + diphosphate + H(+). Its pathway is aminoacyl-tRNA biosynthesis; selenocysteinyl-tRNA(Sec) biosynthesis; L-seryl-tRNA(Sec) from L-serine and tRNA(Sec): step 1/1. Its function is as follows. Catalyzes the attachment of serine to tRNA(Ser). Is also able to aminoacylate tRNA(Sec) with serine, to form the misacylated tRNA L-seryl-tRNA(Sec), which will be further converted into selenocysteinyl-tRNA(Sec). The polypeptide is Serine--tRNA ligase (Latilactobacillus sakei subsp. sakei (strain 23K) (Lactobacillus sakei subsp. sakei)).